The primary structure comprises 101 residues: Small ribosomal subunit protein uS14 (101 aa).

Belongs to the universal ribosomal protein uS14 family. In terms of assembly, part of the 30S ribosomal subunit. Contacts proteins S3 and S10.

Functionally, binds 16S rRNA, required for the assembly of 30S particles and may also be responsible for determining the conformation of the 16S rRNA at the A site. This is Small ribosomal subunit protein uS14 from Citrobacter koseri (strain ATCC BAA-895 / CDC 4225-83 / SGSC4696).